Here is a 1023-residue protein sequence, read N- to C-terminus: Solute carrier family 12 member 3 (1023 aa).

The Cytoplasmic portion of the chain corresponds to 1–134; it reads MELPGDGVHL…EPPPEPPRFG (134 aa). The interval 91 to 131 is disordered; the sequence is DPEQDDFKPPMYEETAGERMGGGDSSEEEEEEHKEPPPEPP. A discontinuously helical transmembrane segment spans residues 135–164; sequence WVQGVMIRCMLNIWGVILYLRLPWITAQAG. Na(+) is bound by residues Leu-145 and Trp-148. The chain crosses the membrane as a helical span at residues 165 to 186; sequence IGLTWVIILLSSFITGITGLST. The Cytoplasmic portion of the chain corresponds to 187–217; it reads SAIATNGKVKGGGTYFLISRSLGPELGGSIG. Residues 218 to 240 traverse the membrane as a helical segment; sequence LIFAFANAVAVAMHTVGFAETVT. The Extracellular segment spans residues 241–252; that stretch reads DLMRENGVVMVD. The next 2 membrane-spanning stretches (helical) occupy residues 253 to 277 and 278 to 300; these read PIND…AGME and WESK…YIVG. Topologically, residues 301–335 are extracellular; sequence TIIPASPQKQAKGFFSYKAEIFAANFVPGWRGKEG. A discontinuously helical membrane pass occupies residues 336–357; it reads SFFGMFSIFFPSATGILAGANI. Residues Gly-350, Ile-351, and Leu-352 each coordinate chloride. The Cytoplasmic portion of the chain corresponds to 358–368; that stretch reads SGDLKDPTVAI. A helical membrane pass occupies residues 369–390; sequence PRGTLMAIFWTTISYLIISATI. The Extracellular portion of the chain corresponds to 391–452; that stretch reads GACVVRDASG…YQSMSLVSAF (62 aa). N-linked (GlcNAc...) asparagine glycosylation is found at Asn-403 and Asn-414. 2 disulfides stabilise this stretch: Cys-415-Cys-420 and Cys-429-Cys-435. The N-linked (GlcNAc...) asparagine glycan is linked to Asn-432. A helical membrane pass occupies residues 453-476; the sequence is APLISAGIFGATLSSALACLVSAP. 3 residues coordinate Na(+): Ala-463, Ser-466, and Ser-467. Residues 477–506 lie on the Cytoplasmic side of the membrane; that stretch reads KVFQCLCKDQLYPLIGFFGKGYGKNAEPLR. The helical transmembrane segment at 507-521 threads the bilayer; sequence AYLLTYVIAVCFVLI. The Extracellular portion of the chain corresponds to 522 to 526; it reads AELNT. Residues 527 to 543 traverse the membrane as a helical segment; sequence IAPIISNFFLCSYALIN. Tyr-539 provides a ligand contact to chloride. The Cytoplasmic segment spans residues 544-566; that stretch reads FSCFHASVTNSPGWRPSFRFYSK. 2 helical membrane-spanning segments follow: residues 567-586 and 587-598; these read WLSL…LTWW and AALIAFGVVFFL. The Cytoplasmic segment spans residues 599 to 1023; sequence LGYTLYKKPA…QENVLTFYCQ (425 aa). The tract at residues 614-629 is scissor helix; it reads SVQASSYSMALNQCVG. Positions 647, 654, 676, 733, and 772 each coordinate ATP.

This sequence belongs to the SLC12A transporter family. Homodimer; adopts a domain-swap conformation at the scissor helices connecting the transmembrane domain and C-terminal domain. In terms of tissue distribution, expressed in urinary bladder, intestine, ovary, skeletal muscle, eye, brain, and kidney.

The protein localises to the cell membrane. The enzyme catalyses chloride(out) + Na(+)(out) = chloride(in) + Na(+)(in). With respect to regulation, inhibited by thiazide-type diuretics including polythiazide, metolazone, cyclothiazide, hydrochlorothiazide and chlorthalidone. Thiazide drugs, specifically inhibit SLC12A3/NCC transporter activity by competing with chloride for binding. Functionally, electroneutral sodium and chloride ion cotransporter, with a coupling ratio 1 Na(+):1 Cl(-). Mediates sodium and chloride reabsorption. The protein is Solute carrier family 12 member 3 (slc12a3) of Pseudopleuronectes americanus (Winter flounder).